The sequence spans 2073 residues: Histone acetyltransferase KAT6B (2073 aa).

The SAMD1-like winged helix (WH) domain maps to 1-77 (MVKLANPLYT…LASYKDPDNP (77 aa)). The interval 72 to 97 (KDPDNPGRFSSVKPGTFPKSAKGSRG) is disordered. The H15 domain occupies 103-176 (RNVDWNKLLR…KDGPQYRVNY (74 aa)). 2 consecutive PHD-type zinc fingers follow at residues 213 to 272 (IPIC…CKTC) and 269 to 320 (CKTC…CRPK). A Phosphoserine modification is found at S355. 4 disordered regions span residues 360 to 409 (EGSM…RPGA), 442 to 531 (FTPS…VPSL), 553 to 583 (TQGQ…TAKS), and 639 to 663 (VTPQ…PDQD). Positions 361-717 (GSMNAFTGRG…ECESGVEDCG (357 aa)) are negatively regulates HAT activity. Polar residues predominate over residues 379 to 399 (KVCTTPSSGHAASGKDSSSRL). Positions 447 to 460 (DGRRSRGEIIDFSK) are enriched in basic and acidic residues. A compositionally biased stretch (polar residues) spans 470 to 485 (QKQSCTSHVLATGTTQ). A compositionally biased stretch (pro residues) spans 488–499 (KPPPSSLPPPTP). The span at 501 to 531 (SGQSPSSQKSSTATSSPSPQSSSSQCSVPSL) shows a compositional bias: low complexity. S647 is modified (phosphoserine). K673 participates in a covalent cross-link: Glycyl lysine isopeptide (Lys-Gly) (interchain with G-Cter in SUMO2). Positions 715 to 989 (DCGRYPSVIE…LDPDSLRWTP (275 aa)) constitute an MYST-type HAT domain. A catalytic region spans residues 718 to 1008 (RYPSVIEFGK…EEEREAEKEA (291 aa)). The C2HC MYST-type zinc-finger motif lies at 748–773 (LYLCEFCLKYMKSKNILLRHSKKCGW). Positions 752 to 1008 (EFCLKYMKSK…EEEREAEKEA (257 aa)) are interaction with BRPF1. Residue K815 is modified to N6-acetyllysine; by autocatalysis. Residues 856 to 860 (SCIMI) and 865 to 871 (QRQGFGR) each bind acetyl-CoA. E891 functions as the Proton donor/acceptor in the catalytic mechanism. S895 is an acetyl-CoA binding site. 3 disordered regions span residues 1022–1452 (EQEI…FKEV), 1484–1538 (SCNS…MEID), and 1580–1619 (QSPQ…SPSV). Polar residues predominate over residues 1025–1043 (ILSTRANSRQSPAKVQSKN). N6-acetyllysine occurs at positions 1038, 1042, and 1044. S1048 bears the Phosphoserine mark. Over residues 1069–1105 (SEEEEEEEDEEEEEEEEEEEEDEEEEEEEEEEEEEEN) the composition is skewed to acidic residues. The segment covering 1106 to 1117 (IQSSPPRLTKPQ) has biased composition (polar residues). Residues 1121-1140 (IKRKRPFVLKKKRGRKRRRI) are compositionally biased toward basic residues. Residues 1142 to 1155 (SSVTTETISETTEV) are compositionally biased toward low complexity. Basic residues predominate over residues 1187 to 1200 (PVLRKAFQHQPGKK). Basic and acidic residues-rich tracts occupy residues 1229-1243 (SNLK…EPLK), 1306-1315 (RIEEEVKETG), and 1341-1350 (EKPEDDLIKP). Over residues 1351-1374 (EEEEEEEEEEEEEEEEEEGEEEEG) the composition is skewed to acidic residues. Basic and acidic residues-rich tracts occupy residues 1378 to 1390 (VEKD…SQEK) and 1396 to 1407 (STEKEDSARLDD). The segment covering 1408–1417 (HEEEEEEDEE) has biased composition (acidic residues). Basic and acidic residues predominate over residues 1433–1452 (HMESAEVEKEELPRESFKEV). The span at 1498-1507 (AVPESDEEPP) shows a compositional bias: acidic residues. A compositionally biased stretch (basic and acidic residues) spans 1513–1529 (QKQDQKNSKEVDTEFKE). The segment at 1560 to 2073 (QDCAETQEAC…QSLNGSYMRR (514 aa)) is interaction with RUNX1 and RUNX2. Polar residues predominate over residues 1580 to 1591 (QSPQIATTLDDC). Over residues 1594-1611 (SDHSSPVSSVHSHPGQSV) the composition is skewed to low complexity.

This sequence belongs to the MYST (SAS/MOZ) family. As to quaternary structure, component of the MOZ/MORF complex composed at least of ING5, KAT6A, KAT6B, MEAF6 and one of BRPF1, BRD1/BRPF2 and BRPF3. Interacts with RUNX1 and RUNX2. In terms of processing, autoacetylated. Autoacetylation at Lys-815 is required for proper function. As to expression, ubiquitously expressed, with high levels in heart, pancreas, testis and ovary.

It localises to the nucleus. The enzyme catalyses L-lysyl-[protein] + acetyl-CoA = N(6)-acetyl-L-lysyl-[protein] + CoA + H(+). Its function is as follows. Histone acetyltransferase which may be involved in both positive and negative regulation of transcription. Required for RUNX2-dependent transcriptional activation. May be involved in cerebral cortex development. Component of the MOZ/MORF complex which has a histone H3 acetyltransferase activity. The chain is Histone acetyltransferase KAT6B (KAT6B) from Homo sapiens (Human).